We begin with the raw amino-acid sequence, 457 residues long: Adenylosuccinate synthetase isozyme 2 B (457 aa).

Residues 40 to 46 (GDEGKGK) and 68 to 70 (GHT) contribute to the GTP site. Residue Asp41 is the Proton acceptor of the active site. Mg(2+)-binding residues include Asp41 and Gly68. Asp41 provides a ligand contact to substrate. IMP contacts are provided by residues 41 to 44 (DEGK), 66 to 69 (NAGH), Thr163, Arg177, Asn256, Thr271, and Arg335. His69 serves as the catalytic Proton donor. A substrate-binding site is contributed by 331-337 (VTTGRKR). GTP is bound by residues Arg337, 363 to 365 (KLD), and 445 to 448 (GVGK).

Belongs to the adenylosuccinate synthetase family. As to quaternary structure, homodimer. It depends on Mg(2+) as a cofactor.

Its subcellular location is the cytoplasm. The protein resides in the mitochondrion. It catalyses the reaction IMP + L-aspartate + GTP = N(6)-(1,2-dicarboxyethyl)-AMP + GDP + phosphate + 2 H(+). It functions in the pathway purine metabolism; AMP biosynthesis via de novo pathway; AMP from IMP: step 1/2. With respect to regulation, inhibited competitively by AMP and IMP and non-competitively by fructose 1,6-bisphosphate. Functionally, plays an important role in the de novo pathway and in the salvage pathway of purine nucleotide biosynthesis. Catalyzes the first committed step in the biosynthesis of AMP from IMP. The polypeptide is Adenylosuccinate synthetase isozyme 2 B (adss2-b) (Xenopus tropicalis (Western clawed frog)).